A 377-amino-acid chain; its full sequence is Probable aspartic-type endopeptidase CTSD (377 aa).

Residues 1–292 (SLIDTGASRT…DFDKNRVGLA (292 aa)) form the Peptidase A1 domain. Asp-4 is a catalytic residue. The N-linked (GlcNAc...) asparagine glycan is linked to Asn-58. Asp-186 is a catalytic residue. Positions 296-351 (YGETKDPPSSSHPPPAPTSNKASGGSPGLPEQSGTSSATTSTTGEPSSGSTASPSA) are disordered. The span at 328–351 (SGTSSATTSTTGEPSSGSTASPSA) shows a compositional bias: low complexity. Residue Ser-350 is the site of GPI-anchor amidated serine attachment. The propeptide at 351–377 (AASSVSMSAWLSLAVFLSTASSLILWD) is removed in mature form.

It belongs to the peptidase A1 family.

The protein localises to the cell membrane. Its function is as follows. Secreted aspartic-type endopeptidase which is secreted and contributes to virulence. The chain is Probable aspartic-type endopeptidase CTSD (CTSD) from Arthroderma otae (strain ATCC MYA-4605 / CBS 113480) (Microsporum canis).